A 605-amino-acid polypeptide reads, in one-letter code: Leucine-rich repeat-containing protein 40 (605 aa).

The disordered stretch occupies residues 1–21; that stretch reads MSRFKRGGKAPDPLSGFRAPK. LRR repeat units lie at residues 83-104, 106-127, 129-151, 152-173, 175-196, 198-219, 221-242, 244-265, 266-287, 290-311, 313-335, 336-357, 429-450, 453-475, 476-497, 499-520, 522-543, 546-567, and 569-590; these read DLTK…ISLL, ALVV…IREL, NLQK…QHLQ, NLKS…IGHL, ILEE…VGQL, GLVK…IGKM, NLRQ…VAGM, SLEQ…PFLT, KLKE…HLQN, SLSV…ISLL, GLER…GSLP, NLKS…ILNK, PITT…IVEM, SVYD…CMLL, KLTH…MEAL, RLQS…LYTI, NLET…QLKK, KLST…LGNC, and SLRA…ILAK.

The sequence is that of Leucine-rich repeat-containing protein 40 (lrrc40) from Xenopus laevis (African clawed frog).